Reading from the N-terminus, the 89-residue chain is Probable Fe(2+)-trafficking protein (89 aa).

This sequence belongs to the Fe(2+)-trafficking protein family.

In terms of biological role, could be a mediator in iron transactions between iron acquisition and iron-requiring processes, such as synthesis and/or repair of Fe-S clusters in biosynthetic enzymes. The polypeptide is Probable Fe(2+)-trafficking protein (Acinetobacter baumannii (strain AB0057)).